The sequence spans 300 residues: Ribonuclease HIII (300 aa).

One can recognise an RNase H type-2 domain in the interval arginine 86 to alanine 300. The a divalent metal cation site is built by aspartate 92, glutamate 93, and aspartate 196.

Belongs to the RNase HII family. RnhC subfamily. Mn(2+) is required as a cofactor. It depends on Mg(2+) as a cofactor.

It localises to the cytoplasm. The enzyme catalyses Endonucleolytic cleavage to 5'-phosphomonoester.. Endonuclease that specifically degrades the RNA of RNA-DNA hybrids. The polypeptide is Ribonuclease HIII (Chlamydia felis (strain Fe/C-56) (Chlamydophila felis)).